Here is a 224-residue protein sequence, read N- to C-terminus: 7-cyano-7-deazaguanine synthase (224 aa).

12–22 (LSGGLDSSTVT) lines the ATP pocket. Zn(2+) is bound by residues Cys-193, Cys-201, Cys-204, and Cys-207.

This sequence belongs to the QueC family. Requires Zn(2+) as cofactor.

The catalysed reaction is 7-carboxy-7-deazaguanine + NH4(+) + ATP = 7-cyano-7-deazaguanine + ADP + phosphate + H2O + H(+). It functions in the pathway purine metabolism; 7-cyano-7-deazaguanine biosynthesis. Its function is as follows. Catalyzes the ATP-dependent conversion of 7-carboxy-7-deazaguanine (CDG) to 7-cyano-7-deazaguanine (preQ(0)). This is 7-cyano-7-deazaguanine synthase from Prochlorococcus marinus (strain MIT 9312).